Reading from the N-terminus, the 408-residue chain is Putative polysaccharide ligase RBE_0399 (408 aa).

A run of 10 helical transmembrane segments spans residues 5 to 25, 72 to 92, 94 to 114, 130 to 150, 163 to 183, 192 to 212, 230 to 250, 325 to 345, 359 to 377, and 380 to 400; these read FFIF…AATV, MTIK…LFAI, PINS…GFVV, LIFG…SYGF, MLDR…AILI, LILY…ASFL, IFSK…PIIA, ILQI…SLVY, FRAS…GMIS, and VWQI…KLLV.

This sequence belongs to the O-antigen ligase family.

The protein localises to the membrane. The polypeptide is Putative polysaccharide ligase RBE_0399 (rfaL) (Rickettsia bellii (strain RML369-C)).